The sequence spans 656 residues: UvrABC system protein C (656 aa).

The 80-residue stretch at 41 to 120 folds into the GIY-YIG domain; it reads KSSGCYLFKD…IKTNKPYFNI (80 aa). The UVR domain maps to 230 to 265; that stretch reads DDLEVFLERKMNQYSNDLEFENAAKIRDQISGLKLL.

This sequence belongs to the UvrC family. As to quaternary structure, interacts with UvrB in an incision complex.

The protein localises to the cytoplasm. In terms of biological role, the UvrABC repair system catalyzes the recognition and processing of DNA lesions. UvrC both incises the 5' and 3' sides of the lesion. The N-terminal half is responsible for the 3' incision and the C-terminal half is responsible for the 5' incision. This is UvrABC system protein C from Prochlorococcus marinus subsp. pastoris (strain CCMP1986 / NIES-2087 / MED4).